Reading from the N-terminus, the 241-residue chain is Uridylate kinase (241 aa).

12–15 contacts ATP; it reads KLSG. Residues 20–25 form an involved in allosteric activation by GTP region; it reads GDKGQG. G54 contacts UMP. Residues G55 and R59 each contribute to the ATP site. UMP-binding positions include D74 and 135–142; that span reads TGSPYFST. Residues N163, Y169, and D172 each coordinate ATP.

Belongs to the UMP kinase family. As to quaternary structure, homohexamer.

Its subcellular location is the cytoplasm. It catalyses the reaction UMP + ATP = UDP + ADP. It participates in pyrimidine metabolism; CTP biosynthesis via de novo pathway; UDP from UMP (UMPK route): step 1/1. With respect to regulation, allosterically activated by GTP. Inhibited by UTP. Functionally, catalyzes the reversible phosphorylation of UMP to UDP. This chain is Uridylate kinase, found in Leuconostoc mesenteroides subsp. mesenteroides (strain ATCC 8293 / DSM 20343 / BCRC 11652 / CCM 1803 / JCM 6124 / NCDO 523 / NBRC 100496 / NCIMB 8023 / NCTC 12954 / NRRL B-1118 / 37Y).